Reading from the N-terminus, the 125-residue chain is Holo-[acyl-carrier-protein] synthase (125 aa).

Positions 8 and 57 each coordinate Mg(2+).

This sequence belongs to the P-Pant transferase superfamily. AcpS family. The cofactor is Mg(2+).

Its subcellular location is the cytoplasm. The enzyme catalyses apo-[ACP] + CoA = holo-[ACP] + adenosine 3',5'-bisphosphate + H(+). In terms of biological role, transfers the 4'-phosphopantetheine moiety from coenzyme A to a Ser of acyl-carrier-protein. This chain is Holo-[acyl-carrier-protein] synthase, found in Blochmanniella pennsylvanica (strain BPEN).